Reading from the N-terminus, the 114-residue chain is MSGDPSEEELEELRKKKMEQLKEQQGGEGEGQEAAQQQAEAQKQAVLKQNLTDGARKRLNTVKMSKPQVGEQIEQQVVALARSGRVQGQIDEDQMKELLSELTPDSKSFDIKRR.

Over residues 1-11 (MSGDPSEEELE) the composition is skewed to acidic residues. A disordered region spans residues 1–45 (MSGDPSEEELEELRKKKMEQLKEQQGGEGEGQEAAQQQAEAQKQA). Residues 12–22 (ELRKKKMEQLK) show a composition bias toward basic and acidic residues. The segment covering 32 to 45 (QEAAQQQAEAQKQA) has biased composition (low complexity).

This sequence belongs to the PDCD5 family.

This Haloarcula marismortui (strain ATCC 43049 / DSM 3752 / JCM 8966 / VKM B-1809) (Halobacterium marismortui) protein is DNA-binding protein rrnAC3180.